The primary structure comprises 208 residues: Uracil phosphoribosyltransferase (208 aa).

Residues R78, R103, and 130 to 138 (DPMLATGGS) each bind 5-phospho-alpha-D-ribose 1-diphosphate. Residues I193 and 198–200 (GDA) each bind uracil. 5-phospho-alpha-D-ribose 1-diphosphate is bound at residue D199.

It belongs to the UPRTase family. Mg(2+) serves as cofactor.

It carries out the reaction UMP + diphosphate = 5-phospho-alpha-D-ribose 1-diphosphate + uracil. It participates in pyrimidine metabolism; UMP biosynthesis via salvage pathway; UMP from uracil: step 1/1. Allosterically activated by GTP. In terms of biological role, catalyzes the conversion of uracil and 5-phospho-alpha-D-ribose 1-diphosphate (PRPP) to UMP and diphosphate. The protein is Uracil phosphoribosyltransferase of Enterobacter sp. (strain 638).